The sequence spans 126 residues: Histone H2B (126 aa).

Positions 1–12 are enriched in low complexity; it reads MPEPAKSAPAPK. The interval 1-36 is disordered; the sequence is MPEPAKSAPAPKKGSKKAVTKTQKKGDKKRKKSRKE. N6-acetyllysine is present on residues lysine 6 and lysine 13. Residues 13–34 are compositionally biased toward basic residues; that stretch reads KGSKKAVTKTQKKGDKKRKKSR. Phosphoserine is present on serine 15. 2 positions are modified to N6-acetyllysine: lysine 16 and lysine 21. Lysine 121 is covalently cross-linked (Glycyl lysine isopeptide (Lys-Gly) (interchain with G-Cter in ubiquitin)).

The protein belongs to the histone H2B family. In terms of assembly, the nucleosome is a histone octamer containing two molecules each of H2A, H2B, H3 and H4 assembled in one H3-H4 heterotetramer and two H2A-H2B heterodimers. The octamer wraps approximately 147 bp of DNA. In terms of processing, monoubiquitination of Lys-121 by the RNF20/40 complex gives a specific tag for epigenetic transcriptional activation and is also prerequisite for histone H3 'Lys-4' and 'Lys-79' methylation. Post-translationally, phosphorylated on Ser-15 during apoptosis; which facilitates apoptotic chromatin condensation.

It is found in the nucleus. The protein localises to the chromosome. Its function is as follows. Core component of nucleosome. Nucleosomes wrap and compact DNA into chromatin, limiting DNA accessibility to the cellular machineries which require DNA as a template. Histones thereby play a central role in transcription regulation, DNA repair, DNA replication and chromosomal stability. DNA accessibility is regulated via a complex set of post-translational modifications of histones, also called histone code, and nucleosome remodeling. In Cairina moschata (Muscovy duck), this protein is Histone H2B.